Here is a 160-residue protein sequence, read N- to C-terminus: 2-C-methyl-D-erythritol 2,4-cyclodiphosphate synthase (160 aa).

A divalent metal cation is bound by residues D10 and H12. 4-CDP-2-C-methyl-D-erythritol 2-phosphate contacts are provided by residues 10–12 (DVH) and 36–37 (HS). H44 contributes to the a divalent metal cation binding site. 4-CDP-2-C-methyl-D-erythritol 2-phosphate-binding positions include 58–60 (DIG), 63–67 (FPDTD), and R144.

This sequence belongs to the IspF family. Homotrimer. The cofactor is a divalent metal cation.

The enzyme catalyses 4-CDP-2-C-methyl-D-erythritol 2-phosphate = 2-C-methyl-D-erythritol 2,4-cyclic diphosphate + CMP. The protein operates within isoprenoid biosynthesis; isopentenyl diphosphate biosynthesis via DXP pathway; isopentenyl diphosphate from 1-deoxy-D-xylulose 5-phosphate: step 4/6. In terms of biological role, involved in the biosynthesis of isopentenyl diphosphate (IPP) and dimethylallyl diphosphate (DMAPP), two major building blocks of isoprenoid compounds. Catalyzes the conversion of 4-diphosphocytidyl-2-C-methyl-D-erythritol 2-phosphate (CDP-ME2P) to 2-C-methyl-D-erythritol 2,4-cyclodiphosphate (ME-CPP) with a corresponding release of cytidine 5-monophosphate (CMP). The chain is 2-C-methyl-D-erythritol 2,4-cyclodiphosphate synthase from Dechloromonas aromatica (strain RCB).